We begin with the raw amino-acid sequence, 310 residues long: Beta-ketoacyl-[acyl-carrier-protein] synthase III (310 aa).

Active-site residues include Cys-112 and His-235. An ACP-binding region spans residues 236–240 (QANIR). Residue Asn-265 is part of the active site.

The protein belongs to the thiolase-like superfamily. FabH family. Homodimer.

The protein resides in the cytoplasm. The enzyme catalyses malonyl-[ACP] + acetyl-CoA + H(+) = 3-oxobutanoyl-[ACP] + CO2 + CoA. The protein operates within lipid metabolism; fatty acid biosynthesis. Functionally, catalyzes the condensation reaction of fatty acid synthesis by the addition to an acyl acceptor of two carbons from malonyl-ACP. Catalyzes the first condensation reaction which initiates fatty acid synthesis and may therefore play a role in governing the total rate of fatty acid production. Possesses both acetoacetyl-ACP synthase and acetyl transacylase activities. Its substrate specificity determines the biosynthesis of branched-chain and/or straight-chain of fatty acids. The protein is Beta-ketoacyl-[acyl-carrier-protein] synthase III of Geobacillus kaustophilus (strain HTA426).